The sequence spans 121 residues: Large ribosomal subunit protein bL12 (121 aa).

The protein belongs to the bacterial ribosomal protein bL12 family. As to quaternary structure, homodimer. Part of the ribosomal stalk of the 50S ribosomal subunit. Forms a multimeric L10(L12)X complex, where L10 forms an elongated spine to which 2 to 4 L12 dimers bind in a sequential fashion. Binds GTP-bound translation factors.

In terms of biological role, forms part of the ribosomal stalk which helps the ribosome interact with GTP-bound translation factors. Is thus essential for accurate translation. This Klebsiella pneumoniae (strain 342) protein is Large ribosomal subunit protein bL12.